The following is a 305-amino-acid chain: Methionyl-tRNA formyltransferase (305 aa).

109–112 (SLLP) lines the (6S)-5,6,7,8-tetrahydrofolate pocket.

This sequence belongs to the Fmt family.

It carries out the reaction L-methionyl-tRNA(fMet) + (6R)-10-formyltetrahydrofolate = N-formyl-L-methionyl-tRNA(fMet) + (6S)-5,6,7,8-tetrahydrofolate + H(+). Its function is as follows. Attaches a formyl group to the free amino group of methionyl-tRNA(fMet). The formyl group appears to play a dual role in the initiator identity of N-formylmethionyl-tRNA by promoting its recognition by IF2 and preventing the misappropriation of this tRNA by the elongation apparatus. This Paramagnetospirillum magneticum (strain ATCC 700264 / AMB-1) (Magnetospirillum magneticum) protein is Methionyl-tRNA formyltransferase.